We begin with the raw amino-acid sequence, 328 residues long: 7,8-didemethyl-8-hydroxy-5-deazariboflavin synthase (328 aa).

Residues 1–242 (MTYSRNIFIP…PDVSIQVPPN (242 aa)) form the Radical SAM core domain. Cys-15, Cys-19, and Cys-22 together coordinate [4Fe-4S] cluster.

It belongs to the radical SAM superfamily. CofG family. Consists of two subunits, CofG and CofH. Requires [4Fe-4S] cluster as cofactor.

It catalyses the reaction 5-amino-5-(4-hydroxybenzyl)-6-(D-ribitylimino)-5,6-dihydrouracil + S-adenosyl-L-methionine = 7,8-didemethyl-8-hydroxy-5-deazariboflavin + 5'-deoxyadenosine + L-methionine + NH4(+) + H(+). It functions in the pathway cofactor biosynthesis; coenzyme F0 biosynthesis. In terms of biological role, catalyzes the radical-mediated synthesis of 7,8-didemethyl-8-hydroxy-5-deazariboflavin from 5-amino-5-(4-hydroxybenzyl)-6-(D-ribitylimino)-5,6-dihydrouracil. The polypeptide is 7,8-didemethyl-8-hydroxy-5-deazariboflavin synthase (Methanothermobacter thermautotrophicus (strain ATCC 29096 / DSM 1053 / JCM 10044 / NBRC 100330 / Delta H) (Methanobacterium thermoautotrophicum)).